The primary structure comprises 133 residues: Profilin-4 (133 aa).

Cys-13 and Cys-117 form a disulfide bridge. Positions 83 to 99 match the Involved in PIP2 interaction motif; sequence AVIRGKKGSGGITIKKT. The residue at position 113 (Thr-113) is a Phosphothreonine.

The protein belongs to the profilin family. In terms of assembly, occurs in many kinds of cells as a complex with monomeric actin in a 1:1 ratio. Phosphorylated by MAP kinases.

It localises to the cytoplasm. Its subcellular location is the cytoskeleton. Binds to actin and affects the structure of the cytoskeleton. At high concentrations, profilin prevents the polymerization of actin, whereas it enhances it at low concentrations. The sequence is that of Profilin-4 from Corylus avellana (European hazel).